A 638-amino-acid polypeptide reads, in one-letter code: Nucleolar protein 4 (638 aa).

Disordered stretches follow at residues 210–312, 343–403, 503–535, and 573–603; these read QQDE…SPLS, EREA…TDGV, NAAK…TYST, and SSGP…QLSP. A compositionally biased stretch (acidic residues) spans 211–225; that stretch reads QDEDESSIESDEFDM. 4 stretches are compositionally biased toward polar residues: residues 229–254, 263–281, 302–312, and 351–363; these read TRMS…NLHG, ESFN…SGGT, QPLNLSDSPLS, and SKSP…SYDS. Basic and acidic residues-rich tracts occupy residues 364-374, 391-403, and 503-515; these read GKNESVDRGAE, HDDS…TDGV, and NAAK…RQQD. Residues 588–597 show a composition bias toward low complexity; the sequence is SSGSSSSSNS.

Expressed predominantly in fetal brain, adult brain and testis.

It is found in the nucleus. Its subcellular location is the nucleolus. The polypeptide is Nucleolar protein 4 (NOL4) (Homo sapiens (Human)).